Here is a 1090-residue protein sequence, read N- to C-terminus: ATP-dependent helicase/deoxyribonuclease subunit B (1090 aa).

Position 7–14 (7–14 (GPVGSGKS)) interacts with ATP. 4 residues coordinate [4Fe-4S] cluster: cysteine 719, cysteine 1035, cysteine 1038, and cysteine 1044.

This sequence belongs to the helicase family. AddB/RexB type 1 subfamily. Heterodimer of AddA and AddB. The cofactor is Mg(2+). [4Fe-4S] cluster serves as cofactor.

In terms of biological role, the heterodimer acts as both an ATP-dependent DNA helicase and an ATP-dependent, dual-direction single-stranded exonuclease. Recognizes the chi site generating a DNA molecule suitable for the initiation of homologous recombination. The AddB subunit has 5' -&gt; 3' nuclease activity but not helicase activity. This Carboxydothermus hydrogenoformans (strain ATCC BAA-161 / DSM 6008 / Z-2901) protein is ATP-dependent helicase/deoxyribonuclease subunit B.